The sequence spans 610 residues: Glutamine--fructose-6-phosphate aminotransferase [isomerizing] (610 aa).

Cysteine 2 serves as the catalytic Nucleophile; for GATase activity. The Glutamine amidotransferase type-2 domain occupies 2 to 218 (CGIVGAVAQR…EGDVAEITRR (217 aa)). SIS domains are found at residues 286–426 (AAEI…QQGR) and 459–600 (LATD…VDQP). The active-site For Fru-6P isomerization activity is lysine 605.

Homodimer.

The protein resides in the cytoplasm. It carries out the reaction D-fructose 6-phosphate + L-glutamine = D-glucosamine 6-phosphate + L-glutamate. Its function is as follows. Catalyzes the first step in hexosamine metabolism, converting fructose-6P into glucosamine-6P using glutamine as a nitrogen source. The protein is Glutamine--fructose-6-phosphate aminotransferase [isomerizing] of Vibrio vulnificus (strain YJ016).